The following is a 139-amino-acid chain: Protein archease (139 aa).

Ca(2+) contacts are provided by Asp-12, Asp-138, and Ile-139.

It belongs to the archease family.

In terms of biological role, activates the tRNA-splicing ligase complex by facilitating the enzymatic turnover of catalytic subunit RtcB. Acts by promoting the guanylylation of RtcB, a key intermediate step in tRNA ligation. Can also alter the NTP specificity of RtcB such that ATP, dGTP or ITP is used efficiently. The sequence is that of Protein archease from Saccharolobus solfataricus (strain ATCC 35092 / DSM 1617 / JCM 11322 / P2) (Sulfolobus solfataricus).